Consider the following 1319-residue polypeptide: Protein Jumonji (1319 aa).

Residues 1–11 (MSKERPKRNII) show a composition bias toward basic residues. 7 disordered regions span residues 1 to 23 (MSKERPKRNIIQKKYDDNDGMPW), 50 to 130 (DGID…PSLP), 173 to 265 (DEED…NTNG), 351 to 382 (YSNNHHHNSHHATSNGHGRPQLSHSGKAQSIN), 396 to 478 (HKMT…KALN), 499 to 537 (PIQKTGPAPPPSPPAAPASPSMPQNPAIPEPARQRPKRA), and 549 to 599 (QQRA…RSRA). Positions 61-70 (ASLSNGQLNG) are enriched in polar residues. A compositionally biased stretch (basic and acidic residues) spans 74–88 (GHKEDGSRSQRKDGG). The short motif at 96–102 (PAKKRPR) is the Nuclear localization signal element. Residues 98–107 (KKRPRLHAQR) are compositionally biased toward basic residues. Residues 109 to 121 (FAQSQPNSPSNTP) are compositionally biased toward polar residues. Positions 173 to 185 (DEEDLEDEDEIEE) are enriched in acidic residues. The segment covering 191–200 (VASTSCQSTP) has biased composition (polar residues). The segment covering 221 to 251 (KDKELTPRSKARESSVGRDRSERCDESEISH) has biased composition (basic and acidic residues). Over residues 372 to 382 (LSHSGKAQSIN) the composition is skewed to polar residues. Basic and acidic residues predominate over residues 413-424 (SAREEEVVDRPV). Residues 505–515 (PAPPPSPPAAP) show a composition bias toward pro residues. Composition is skewed to low complexity over residues 516-525 (ASPSMPQNPA) and 554-570 (TNPTLNRTTSTTSASKS). Residues 583–598 (RLDRDRERERERERSR) are compositionally biased toward basic and acidic residues. The region spanning 607–648 (VPIFKPSSREFQDPLVYLDSFREQVESCGLCRVLPPTDWRPE) is the JmjN domain. The ARID domain occupies 671 to 779 (WGPNVQKLAC…FLLSYDLLSP (109 aa)). The segment covering 798-811 (RKRGPLEGHSDNGH) has biased composition (basic and acidic residues). The segment at 798–818 (RKRGPLEGHSDNGHHSLALPR) is disordered. A GSGFP motif motif is present at residues 944–948 (GSGFP). A JmjC domain is found at 954–1118 (PFSKHGWNLT…LGYEAAKDLK (165 aa)).

It belongs to the JARID2 family. As to quaternary structure, associates with the PRC2 complex.

It localises to the nucleus. Its function is as follows. Regulator of histone methyltransferase complexes that plays an essential role in embryonic development. Acts by modulating histone methyltransferase activity and promoting the recruitment of histone methyltransferase complexes to their target genes. Binds DNA and mediates the recruitment of the PRC2 complex to target genes in embryonic stem cells. Does not have histone demethylase activity but regulates activity of various histone methyltransferase complexes. In embryonic stem cells, it associates with the PRC2 complex and inhibits trimethylation of 'Lys-27' of histone H3 (H3K27me3) by the PRC2 complex, thereby playing a key role in differentiation of embryonic stem cells and normal development. The sequence is that of Protein Jumonji (jarid2b) from Danio rerio (Zebrafish).